The chain runs to 427 residues: 3-isopropylmalate dehydratase large subunit (427 aa).

3 residues coordinate [4Fe-4S] cluster: Cys308, Cys368, and Cys371.

The protein belongs to the aconitase/IPM isomerase family. LeuC type 2 subfamily. In terms of assembly, heterodimer of LeuC and LeuD. The cofactor is [4Fe-4S] cluster.

It carries out the reaction (2R,3S)-3-isopropylmalate = (2S)-2-isopropylmalate. It participates in amino-acid biosynthesis; L-leucine biosynthesis; L-leucine from 3-methyl-2-oxobutanoate: step 2/4. Catalyzes the isomerization between 2-isopropylmalate and 3-isopropylmalate, via the formation of 2-isopropylmaleate. The chain is 3-isopropylmalate dehydratase large subunit from Citrifermentans bemidjiense (strain ATCC BAA-1014 / DSM 16622 / JCM 12645 / Bem) (Geobacter bemidjiensis).